A 154-amino-acid polypeptide reads, in one-letter code: CASP-like protein ARALYDRAFT_485429 (154 aa).

Topologically, residues 1 to 12 (MENVPGSFGTSA) are cytoplasmic. The helical transmembrane segment at 13–33 (SFALRFGQTIFSAASLIFMCF) threads the bilayer. Topologically, residues 34–41 (DYDFYDFT) are extracellular. Residues 42-62 (TFCYLATVMAIVTPWSILLAL) traverse the membrane as a helical segment. Residues 63–81 (TDTYSVLVKLLPQELRVLS) are Cytoplasmic-facing. The chain crosses the membrane as a helical span at residues 82–102 (IVFAGDFVLSFLSLGGACAVA). Residues 103–128 (SATELLASADGKICDGNLCIQYQVSA) lie on the Extracellular side of the membrane. A helical transmembrane segment spans residues 129–149 (ALAFLCWFLLLASALFNFWSL). Over 150 to 154 (PSLYY) the chain is Cytoplasmic.

Belongs to the Casparian strip membrane proteins (CASP) family. In terms of assembly, homodimer and heterodimers.

The protein resides in the cell membrane. The sequence is that of CASP-like protein ARALYDRAFT_485429 from Arabidopsis lyrata subsp. lyrata (Lyre-leaved rock-cress).